A 416-amino-acid chain; its full sequence is NADH-quinone oxidoreductase subunit H (416 aa).

9 consecutive transmembrane segments (helical) span residues 16 to 36 (LILAKAVGVFVFLVLTVLAAI), 84 to 104 (PVYLLAPVISVIPAFLAFAVI), 124 to 144 (LAVAVLYILAVTSVGVYGIVL), 165 to 185 (VVSYEIAMALSFATVFLYAGT), 197 to 217 (STWYVFLLLPSFLVYVTSMVG), 260 to 280 (VSALATTMFLGGWHAPWPISL), 288 to 308 (WWPLLWFTAKVWVFLFVYIWL), 320 to 340 (FMAIGWKMLIPVSLAWIMIVA), and 353 to 373 (WASGLLIAGTVLTFGLAVILW).

It belongs to the complex I subunit 1 family. NDH-1 is composed of 14 different subunits. Subunits NuoA, H, J, K, L, M, N constitute the membrane sector of the complex.

The protein resides in the cell membrane. It catalyses the reaction a quinone + NADH + 5 H(+)(in) = a quinol + NAD(+) + 4 H(+)(out). Its function is as follows. NDH-1 shuttles electrons from NADH, via FMN and iron-sulfur (Fe-S) centers, to quinones in the respiratory chain. The immediate electron acceptor for the enzyme in this species is believed to be menaquinone. Couples the redox reaction to proton translocation (for every two electrons transferred, four hydrogen ions are translocated across the cytoplasmic membrane), and thus conserves the redox energy in a proton gradient. This subunit may bind ubiquinone. In Mycobacterium sp. (strain KMS), this protein is NADH-quinone oxidoreductase subunit H.